Reading from the N-terminus, the 921-residue chain is Isoleucine--tRNA ligase (921 aa).

Positions 57–67 (PYANGDIHMGH) match the 'HIGH' region motif. Residue Glu552 coordinates L-isoleucyl-5'-AMP. The short motif at 593 to 597 (KMSKS) is the 'KMSKS' region element. Position 596 (Lys596) interacts with ATP. Zn(2+) contacts are provided by Cys888, Cys891, Cys908, and Cys911.

The protein belongs to the class-I aminoacyl-tRNA synthetase family. IleS type 1 subfamily. Monomer. The cofactor is Zn(2+).

It localises to the cytoplasm. The catalysed reaction is tRNA(Ile) + L-isoleucine + ATP = L-isoleucyl-tRNA(Ile) + AMP + diphosphate. Catalyzes the attachment of isoleucine to tRNA(Ile). As IleRS can inadvertently accommodate and process structurally similar amino acids such as valine, to avoid such errors it has two additional distinct tRNA(Ile)-dependent editing activities. One activity is designated as 'pretransfer' editing and involves the hydrolysis of activated Val-AMP. The other activity is designated 'posttransfer' editing and involves deacylation of mischarged Val-tRNA(Ile). The sequence is that of Isoleucine--tRNA ligase from Bacillus cytotoxicus (strain DSM 22905 / CIP 110041 / 391-98 / NVH 391-98).